A 243-amino-acid polypeptide reads, in one-letter code: Voltage-gated monoatomic cation channel TMEM109 (243 aa).

Positions 1-33 are cleaved as a signal peptide; that stretch reads MAASSISSPWGKHVFKAILMVLVALILLHSALA. The Lumenal portion of the chain corresponds to 34 to 83; it reads QSRRDFAPPGQQKREAPVDVLTQIGRSVRGTLDAWIGPETMHLVSESSSQ. The chain crosses the membrane as a helical span at residues 84 to 104; it reads VLWAISSAISVAFFALSGIAA. Residues 105–135 are Cytoplasmic-facing; that stretch reads QLLNALGLAGDYLAQGLKLSPGQVQTFLLWG. A helical membrane pass occupies residues 136 to 156; that stretch reads AGALVVYWLLSLLLGLVLALL. Topologically, residues 157-185 are lumenal; the sequence is GRILWGLKLVIFLAGFVALMRSVPDPSTR. Residues 186–205 traverse the membrane as a helical segment; it reads ALLLLALLILYALLSRLTGS. Residues 206 to 243 lie on the Cytoplasmic side of the membrane; sequence RASGAQLEAKVRGLERQVEELRWRQRRAAKGARSVEEE.

In terms of assembly, homooligomer. Interacts with CRYAB; in the cellular response to DNA damage.

The protein resides in the nucleus outer membrane. The protein localises to the endoplasmic reticulum membrane. Its subcellular location is the sarcoplasmic reticulum membrane. The enzyme catalyses K(+)(in) = K(+)(out). The catalysed reaction is Ca(2+)(in) = Ca(2+)(out). In terms of biological role, functions as a voltage-gated monoatomic cation channel permeable to both potassium and calcium. Plays a role in the cellular response to DNA damage. The sequence is that of Voltage-gated monoatomic cation channel TMEM109 from Homo sapiens (Human).